The chain runs to 47 residues: Boigatoxin-A (47 aa).

Pyrrolidone carboxylic acid is present on Gln1. 2 disulfide bridges follow: Cys10/Cys34 and Cys13/Cys21.

In terms of assembly, monomer. In terms of tissue distribution, expressed by the venom gland.

It localises to the secreted. Its function is as follows. This toxin may inhibit nicotinic acetylcholine receptor (nAChR). It has poorly reversible postsynaptic blocking activity in a chick muscle preparation and readily reversible inhibitory activity at a presynaptic site in the rat vas deferens prostatic segment most likely to prevent the release of neurotransmitters. The sequence is that of Boigatoxin-A from Boiga dendrophila (Mangrove snake).